The chain runs to 1352 residues: Patatin-like phospholipase domain-containing protein 7 (1352 aa).

Residues 1-36 lie on the Lumenal side of the membrane; the sequence is MQNEEDACLEAGYCLGTTLSSWRLHFMEEQSQSTML. The chain crosses the membrane as a helical span at residues 37-57; that stretch reads MGIGIGALLTLAFVGITFFFV. Topologically, residues 58-1352 are cytoplasmic; that stretch reads YRRVRRLRRA…DQGPRLEHPS (1295 aa). An a nucleoside 3',5'-cyclic phosphate-binding site is contributed by 170–297; that stretch reads VLGHFEKPLF…VRVVQIIMVR (128 aa). The interval 340 to 364 is disordered; that stretch reads MSYGPEEQLERSLRPSEFSSSDHGS. 2 positions are modified to phosphoserine: Ser-341 and Ser-379. Residues 384–411 are disordered; the sequence is SNHGEVDELRQSQGSGSNTSAFQESHEG. Positions 394–406 are enriched in polar residues; it reads QSQGSGSNTSAFQ. Residues 499–585 and 613–718 contribute to the a nucleoside 3',5'-cyclic phosphate site; these read FLHV…YEIM and ALDW…LGEK. Residues 681–967 form an involved in the binding to lipid droplets region; that stretch reads VHAVRDSELA…RGCAQVGILR (287 aa). Positions 950–1116 constitute a PNPLA domain; the sequence is LVLGGGGARG…INNLPADVAR (167 aa). The short motif at 954–959 is the GXGXXG element; sequence GGGARG. Residues 981–985 carry the GXSXG motif; sequence GTSIG. Ser-983 (nucleophile) is an active-site residue. The active-site Proton acceptor is the Asp-1103. Residues 1103 to 1105 carry the DGA/G motif; that stretch reads DGG. Ser-1280 carries the phosphoserine modification. At Thr-1284 the chain carries Phosphothreonine. The disordered stretch occupies residues 1295–1352; the sequence is KETYADFQSTGIELDSDSEYEPSMLQGPPSLTSPEQSQDSFPWLPNQDDQGPRLEHPS. A compositionally biased stretch (polar residues) spans 1323–1334; the sequence is PSLTSPEQSQDS.

The protein belongs to the NTE family. As to expression, expressed in white and brown adipose tissue, cardiac muscle, skeletal muscle, and testis. Expressed in white adipose tissue, cardiac muscle, skeletal muscle, and testis.

It is found in the endoplasmic reticulum membrane. Its subcellular location is the lipid droplet. The catalysed reaction is a 1-acyl-sn-glycero-3-phosphocholine + H2O = sn-glycerol 3-phosphocholine + a fatty acid + H(+). It carries out the reaction 1-(9Z-octadecenoyl)-sn-glycero-3-phosphocholine + H2O = sn-glycerol 3-phosphocholine + (9Z)-octadecenoate + H(+). It catalyses the reaction 1-(9Z-octadecenoyl)-sn-glycero-3-phosphoethanolamine + H2O = sn-glycero-3-phosphoethanolamine + (9Z)-octadecenoate + H(+). The enzyme catalyses 1-(9Z-octadecenoyl)-sn-glycero-3-phospho-L-serine + H2O = sn-glycero-3-phospho-L-serine + (9Z)-octadecenoate + H(+). The catalysed reaction is 1-hexadecanoyl-sn-glycero-3-phosphocholine + H2O = sn-glycerol 3-phosphocholine + hexadecanoate + H(+). It carries out the reaction 1-hexadecanoyl-sn-glycero-3-phosphate + H2O = sn-glycerol 3-phosphate + hexadecanoate + H(+). Its activity is regulated as follows. cAMP does not regulate lysophospholipase activity in vitro. Slightly inhibited by organophosphorus (OP) compounds such as mipafox, which is likely why mice are less sensitive to distal axonophathy induced by OPs compared to humans. Lysophospholipase which preferentially deacylates unsaturated lysophosphatidylcholine (C18:1), generating glycerophosphocholine. Can also deacylate, to a lesser extent, lysophosphatidylethanolamine (C18:1), lysophosphatidyl-L-serine (C18:1) and lysophosphatidic acid (C16:0). Its function is as follows. Lysophospholipase. Functionally, lacks lysophospholipase activity. The polypeptide is Patatin-like phospholipase domain-containing protein 7 (Pnpla7) (Mus musculus (Mouse)).